The chain runs to 209 residues: Orotate phosphoribosyltransferase (209 aa).

5-phospho-alpha-D-ribose 1-diphosphate is bound by residues Arg96, Lys100, His102, and 122-130 (EDLISTGGS). An orotate-binding site is contributed by Ser126.

The protein belongs to the purine/pyrimidine phosphoribosyltransferase family. PyrE subfamily. In terms of assembly, homodimer. The cofactor is Mg(2+).

The enzyme catalyses orotidine 5'-phosphate + diphosphate = orotate + 5-phospho-alpha-D-ribose 1-diphosphate. The protein operates within pyrimidine metabolism; UMP biosynthesis via de novo pathway; UMP from orotate: step 1/2. Catalyzes the transfer of a ribosyl phosphate group from 5-phosphoribose 1-diphosphate to orotate, leading to the formation of orotidine monophosphate (OMP). The chain is Orotate phosphoribosyltransferase from Streptococcus thermophilus (strain CNRZ 1066).